Reading from the N-terminus, the 343-residue chain is Fructose-1,6-bisphosphatase class 1 (343 aa).

Mg(2+) is bound by residues Glu91, Asp113, Ile115, and Asp116. Residues 116 to 119, Asn210, and Lys276 each bind substrate; that span reads DGSS. Residue Glu282 participates in Mg(2+) binding.

This sequence belongs to the FBPase class 1 family. As to quaternary structure, homotetramer. Mg(2+) is required as a cofactor.

The protein localises to the cytoplasm. It catalyses the reaction beta-D-fructose 1,6-bisphosphate + H2O = beta-D-fructose 6-phosphate + phosphate. It functions in the pathway carbohydrate biosynthesis; gluconeogenesis. This chain is Fructose-1,6-bisphosphatase class 1, found in Parvibaculum lavamentivorans (strain DS-1 / DSM 13023 / NCIMB 13966).